The following is a 264-amino-acid chain: Thymidylate synthase (264 aa).

Arg-21 is a binding site for dUMP. Position 51 (His-51) interacts with (6R)-5,10-methylene-5,6,7,8-tetrahydrofolate. 126-127 (RR) is a dUMP binding site. The active-site Nucleophile is Cys-146. Residues 166-169 (RSCD), Asn-177, and 207-209 (HLY) contribute to the dUMP site. Asp-169 contacts (6R)-5,10-methylene-5,6,7,8-tetrahydrofolate. Ala-263 is a (6R)-5,10-methylene-5,6,7,8-tetrahydrofolate binding site.

This sequence belongs to the thymidylate synthase family. Bacterial-type ThyA subfamily. Homodimer.

The protein resides in the cytoplasm. It catalyses the reaction dUMP + (6R)-5,10-methylene-5,6,7,8-tetrahydrofolate = 7,8-dihydrofolate + dTMP. Its pathway is pyrimidine metabolism; dTTP biosynthesis. In terms of biological role, catalyzes the reductive methylation of 2'-deoxyuridine-5'-monophosphate (dUMP) to 2'-deoxythymidine-5'-monophosphate (dTMP) while utilizing 5,10-methylenetetrahydrofolate (mTHF) as the methyl donor and reductant in the reaction, yielding dihydrofolate (DHF) as a by-product. This enzymatic reaction provides an intracellular de novo source of dTMP, an essential precursor for DNA biosynthesis. This is Thymidylate synthase from Yersinia pestis bv. Antiqua (strain Antiqua).